The following is a 302-amino-acid chain: Pyridoxal kinase (302 aa).

Residues serine 10, threonine 45, and tyrosine 122 each coordinate substrate. Residues 181–182 (TS) and 215–227 (VGPK…TGTG) each bind ATP. Aspartate 228 contacts substrate.

This sequence belongs to the pyridoxine kinase family. Homodimer. A divalent metal cation is required as a cofactor.

It localises to the cytoplasm. It catalyses the reaction pyridoxal + ATP = pyridoxal 5'-phosphate + ADP + H(+). Its pathway is cofactor metabolism; pyridoxal 5'-phosphate salvage; pyridoxal 5'-phosphate from pyridoxal: step 1/1. Functionally, required for synthesis of pyridoxal-5-phosphate from vitamin B6. This chain is Pyridoxal kinase (pykA), found in Dictyostelium discoideum (Social amoeba).